We begin with the raw amino-acid sequence, 73 residues long: Small ribosomal subunit protein bS18 (73 aa).

It belongs to the bacterial ribosomal protein bS18 family. In terms of assembly, part of the 30S ribosomal subunit. Forms a tight heterodimer with protein bS6.

Functionally, binds as a heterodimer with protein bS6 to the central domain of the 16S rRNA, where it helps stabilize the platform of the 30S subunit. This Neorickettsia sennetsu (strain ATCC VR-367 / Miyayama) (Ehrlichia sennetsu) protein is Small ribosomal subunit protein bS18.